Here is a 251-residue protein sequence, read N- to C-terminus: uncharacterized protein (251 aa).

The HTH deoR-type domain maps to T3–K58. A DNA-binding region (H-T-H motif) is located at residues V20–D39.

This is an uncharacterized protein from Bacillus subtilis (strain 168).